A 194-amino-acid polypeptide reads, in one-letter code: Large ribosomal subunit protein eL15 (194 aa).

Positions 168-194 (RSRGLLNKGKGAEKVRPSIRAHQGKGK) are disordered. Residues 184 to 194 (PSIRAHQGKGK) are compositionally biased toward basic residues.

This sequence belongs to the eukaryotic ribosomal protein eL15 family. In terms of assembly, part of the 50S ribosomal subunit.

In Thermococcus kodakarensis (strain ATCC BAA-918 / JCM 12380 / KOD1) (Pyrococcus kodakaraensis (strain KOD1)), this protein is Large ribosomal subunit protein eL15.